The sequence spans 41 residues: Alpha-conotoxin-like Pu1.2 (41 aa).

A propeptide spanning residues 1 to 21 is cleaved from the precursor; it reads LDGRNAAADFETSDLLAMTIR. 2 cysteine pairs are disulfide-bonded: Cys24-Cys30 and Cys25-Cys37. Position 37 is a cysteine amide (Cys37). Residues 38 to 41 constitute a propeptide that is removed on maturation; it reads GGKR.

The protein belongs to the conotoxin A superfamily. Non-native isomers 'ribbon' (with disulfide connectivity C1-C4, C2-C3) and 'beads' (with disulfide connectivity C1-C2, C3-C4) also inhibit high voltage-activated (HVA) calcium channel currents in rat DRG neurons (25-30% inhibition at 1 uM toxin). In terms of processing, mutants Pu1.2(9-16), [C3S; C9S]Pu1.2 and [C4S]Pu1.2(1-9) are all C-terminally amidated. Expressed by the venom duct.

Its subcellular location is the secreted. Alpha-conotoxins act on postsynaptic membranes, they bind to the nicotinic acetylcholine receptors (nAChR) and thus inhibit them. This toxin also inhibits high voltage-activated (HVA) calcium channel currents in rat DRG neurons (27% inhibition at 1 uM toxin) probably by activating GABA(B) receptors (GABBR1 and/or GABBR2). The polypeptide is Alpha-conotoxin-like Pu1.2 (Conus pulicarius (Flea-bitten cone)).